Consider the following 196-residue polypeptide: Nitrogen regulatory protein P-II homolog (196 aa).

The transit peptide at 1–61 directs the protein to the chloroplast; the sequence is MAASMTKPIS…NNSRVLPVVS (61 aa). ATP is bound by residues 108 to 112 and 161 to 164; these read GFGAQ and GDGK. Position 110 (G110) interacts with Mg(2+).

It belongs to the P(II) protein family. As to quaternary structure, homodimer. Interacts with NAGK. Interaction with NAGK is dependent of MgATP and inhibited by 2-oxoglutarate, arginine, glutamate, citrate, and oxaloacetate.

The protein resides in the plastid. The protein localises to the chloroplast. Participates in sensing carbon and organic nitrogen status and regulates some steps of primary carbon and nitrogen metabolism. Required for nitrite uptake in chloroplasts and regulates arginine biosynthesis through interaction with acetylglutamate kinase (NAGK) in chloroplasts. Regulates fatty acids synthesis in chloroplasts by interacting with the acetyl-CoA carboxylase complex and inhibiting acetyl-CoA carboxylase (ACCase) activity. This is Nitrogen regulatory protein P-II homolog (GLB1) from Arabidopsis thaliana (Mouse-ear cress).